The following is a 187-amino-acid chain: uncharacterized protein (187 aa).

The chain crosses the membrane as a helical span at residues Ile8–Phe28. The segment at Pro99–Arg153 is disordered. Residues Ile137–Glu149 are compositionally biased toward polar residues.

The protein localises to the membrane. This is an uncharacterized protein from Homo sapiens (Human).